We begin with the raw amino-acid sequence, 69 residues long: Cytochrome c oxidase subunit 8A, mitochondrial (69 aa).

A mitochondrion-targeting transit peptide spans 1 to 25; the sequence is MSVLTSLLLRGLTGSARRLPVPRAK. The Mitochondrial matrix segment spans residues 26–36; it reads VHSMPPEEELG. A helical membrane pass occupies residues 37 to 60; that stretch reads IMEKAIGLTFCFVSLFLPAGWILS. Residues 61 to 69 are Mitochondrial intermembrane-facing; it reads HLEDYKRPE.

The protein belongs to the cytochrome c oxidase VIII family. As to quaternary structure, component of the cytochrome c oxidase (complex IV, CIV), a multisubunit enzyme composed of 14 subunits. The complex is composed of a catalytic core of 3 subunits MT-CO1, MT-CO2 and MT-CO3, encoded in the mitochondrial DNA, and 11 supernumerary subunits COX4I, COX5A, COX5B, COX6A, COX6B, COX6C, COX7A, COX7B, COX7C, COX8 and NDUFA4, which are encoded in the nuclear genome. The complex exists as a monomer or a dimer and forms supercomplexes (SCs) in the inner mitochondrial membrane with NADH-ubiquinone oxidoreductase (complex I, CI) and ubiquinol-cytochrome c oxidoreductase (cytochrome b-c1 complex, complex III, CIII), resulting in different assemblies (supercomplex SCI(1)III(2)IV(1) and megacomplex MCI(2)III(2)IV(2)). In terms of processing, in response to mitochondrial stress, the precursor protein is ubiquitinated by the SIFI complex in the cytoplasm before mitochondrial import, leading to its degradation. Within the SIFI complex, UBR4 initiates ubiquitin chain that are further elongated or branched by KCMF1.

It is found in the mitochondrion inner membrane. It functions in the pathway energy metabolism; oxidative phosphorylation. Its function is as follows. Component of the cytochrome c oxidase, the last enzyme in the mitochondrial electron transport chain which drives oxidative phosphorylation. The respiratory chain contains 3 multisubunit complexes succinate dehydrogenase (complex II, CII), ubiquinol-cytochrome c oxidoreductase (cytochrome b-c1 complex, complex III, CIII) and cytochrome c oxidase (complex IV, CIV), that cooperate to transfer electrons derived from NADH and succinate to molecular oxygen, creating an electrochemical gradient over the inner membrane that drives transmembrane transport and the ATP synthase. Cytochrome c oxidase is the component of the respiratory chain that catalyzes the reduction of oxygen to water. Electrons originating from reduced cytochrome c in the intermembrane space (IMS) are transferred via the dinuclear copper A center (CU(A)) of subunit 2 and heme A of subunit 1 to the active site in subunit 1, a binuclear center (BNC) formed by heme A3 and copper B (CU(B)). The BNC reduces molecular oxygen to 2 water molecules using 4 electrons from cytochrome c in the IMS and 4 protons from the mitochondrial matrix. This is Cytochrome c oxidase subunit 8A, mitochondrial (COX8A) from Macaca fascicularis (Crab-eating macaque).